Here is a 297-residue protein sequence, read N- to C-terminus: Acetyl-coenzyme A carboxylase carboxyl transferase subunit beta (297 aa).

The CoA carboxyltransferase N-terminal domain occupies 27-296 (LWHKCPSCEA…PVETSQVTAK (270 aa)). Residues cysteine 31, cysteine 34, cysteine 50, and cysteine 53 each contribute to the Zn(2+) site. The segment at 31 to 53 (CPSCEAVLYRPELEKTLDVCPKC) adopts a C4-type zinc-finger fold.

Belongs to the AccD/PCCB family. In terms of assembly, acetyl-CoA carboxylase is a heterohexamer composed of biotin carboxyl carrier protein (AccB), biotin carboxylase (AccC) and two subunits each of ACCase subunit alpha (AccA) and ACCase subunit beta (AccD). Zn(2+) is required as a cofactor.

It localises to the cytoplasm. The enzyme catalyses N(6)-carboxybiotinyl-L-lysyl-[protein] + acetyl-CoA = N(6)-biotinyl-L-lysyl-[protein] + malonyl-CoA. It functions in the pathway lipid metabolism; malonyl-CoA biosynthesis; malonyl-CoA from acetyl-CoA: step 1/1. In terms of biological role, component of the acetyl coenzyme A carboxylase (ACC) complex. Biotin carboxylase (BC) catalyzes the carboxylation of biotin on its carrier protein (BCCP) and then the CO(2) group is transferred by the transcarboxylase to acetyl-CoA to form malonyl-CoA. This Stutzerimonas stutzeri (strain A1501) (Pseudomonas stutzeri) protein is Acetyl-coenzyme A carboxylase carboxyl transferase subunit beta.